We begin with the raw amino-acid sequence, 83 residues long: Putative defensin-like protein 131 (83 aa).

The signal sequence occupies residues 1-34 (MAKNRVLTIFYCTIYYCICFKYVLLGMVVEKTQG). 4 cysteine pairs are disulfide-bonded: Cys37/Cys83, Cys46/Cys65, Cys51/Cys77, and Cys55/Cys79.

This sequence belongs to the DEFL family.

It is found in the secreted. The chain is Putative defensin-like protein 131 (LCR29) from Arabidopsis thaliana (Mouse-ear cress).